A 378-amino-acid chain; its full sequence is Ribosomal RNA large subunit methyltransferase G (378 aa).

This sequence belongs to the methyltransferase superfamily. RlmG family.

The protein resides in the cytoplasm. The catalysed reaction is guanosine(1835) in 23S rRNA + S-adenosyl-L-methionine = N(2)-methylguanosine(1835) in 23S rRNA + S-adenosyl-L-homocysteine + H(+). Specifically methylates the guanine in position 1835 (m2G1835) of 23S rRNA. This chain is Ribosomal RNA large subunit methyltransferase G, found in Enterobacter sp. (strain 638).